Reading from the N-terminus, the 141-residue chain is Large ribosomal subunit protein uL11 (141 aa).

It belongs to the universal ribosomal protein uL11 family. Part of the ribosomal stalk of the 50S ribosomal subunit. Interacts with L10 and the large rRNA to form the base of the stalk. L10 forms an elongated spine to which L12 dimers bind in a sequential fashion forming a multimeric L10(L12)X complex. In terms of processing, one or more lysine residues are methylated.

Functionally, forms part of the ribosomal stalk which helps the ribosome interact with GTP-bound translation factors. In Dinoroseobacter shibae (strain DSM 16493 / NCIMB 14021 / DFL 12), this protein is Large ribosomal subunit protein uL11.